The primary structure comprises 331 residues: GTP 3',8-cyclase (331 aa).

The Radical SAM core domain maps to 6-234 (PFNRKIDYLR…PATGKSHDGP (229 aa)). Residue Arg-15 participates in GTP binding. [4Fe-4S] cluster-binding residues include Cys-22 and Cys-26. Tyr-28 lines the S-adenosyl-L-methionine pocket. Cys-29 contacts [4Fe-4S] cluster. Arg-66 is a GTP binding site. Position 70 (Gly-70) interacts with S-adenosyl-L-methionine. Ser-97 contacts GTP. Ser-121 lines the S-adenosyl-L-methionine pocket. GTP is bound at residue Lys-158. Residue Met-192 participates in S-adenosyl-L-methionine binding. Cys-258 and Cys-261 together coordinate [4Fe-4S] cluster. Position 263–265 (263–265 (RVR)) interacts with GTP. [4Fe-4S] cluster is bound at residue Cys-275.

This sequence belongs to the radical SAM superfamily. MoaA family. In terms of assembly, monomer and homodimer. [4Fe-4S] cluster serves as cofactor.

It catalyses the reaction GTP + AH2 + S-adenosyl-L-methionine = (8S)-3',8-cyclo-7,8-dihydroguanosine 5'-triphosphate + 5'-deoxyadenosine + L-methionine + A + H(+). Its pathway is cofactor biosynthesis; molybdopterin biosynthesis. Its function is as follows. Catalyzes the cyclization of GTP to (8S)-3',8-cyclo-7,8-dihydroguanosine 5'-triphosphate. In Hydrogenovibrio crunogenus (strain DSM 25203 / XCL-2) (Thiomicrospira crunogena), this protein is GTP 3',8-cyclase.